Consider the following 571-residue polypeptide: MEILSGAEMVIRSLINQGIQHIFGYPGGAVLDIYDALKTVGGVEHILVRHEQAATHMADGYARSTGKIGVVLVTSGPGATNAITGIATAYMDSIPMVVISGQVASSLIGYDAFQECDMIGISRPIVKHSFLVKRTEDIPIIFKKAFWLASTGRPGPVVIDLPKDILKKTNKYNFIWPKNIHIRSYNPTTKGHQGQIKKALRILLKAKKPIIYAGGGIISSNSSEELRIFAEKINCPVTTSLMGLGAFPGNHIQSISMLGMHGTYEANMAMHYSDVIFAIGVRFDDRTTNNLKKYCPNATILHVDIDPTSISKTVSADIPIVGDAKQVLKEMIELIKKEKQIHSLKEWWSSIGKWKKIKSLEYNKKSNKIKPQKIIQTLFKLTKGTSYITSDVGQHQMFTALYYQFNKPRRWINSGGLGTMGFGLPAALGVKLALPKATVICVTGDGSIQMNIQELSTARQYNLAVLILNLNNSSLGMVKQWQDMIYSGRHSHSYMDSLPDFVKLVESYGHIGLKVKTNEELEEKLILALKKLSEGNLVFLDIQIDDSEHVYPMQIQGGGMNEMWLRKKEVS.

E51 is a thiamine diphosphate binding site. FAD is bound by residues R153, 261-282 (HGTYEANMAMHYSDVIFAIGVR), and 304-323 (DIDPTSISKTVSADIPIVGD). The segment at 394 to 474 (QHQMFTALYY…VLILNLNNSS (81 aa)) is thiamine pyrophosphate binding. Mg(2+) contacts are provided by D445 and N472.

Belongs to the TPP enzyme family. As to quaternary structure, dimer of large and small chains. The cofactor is Mg(2+). Requires thiamine diphosphate as cofactor.

It catalyses the reaction 2 pyruvate + H(+) = (2S)-2-acetolactate + CO2. It functions in the pathway amino-acid biosynthesis; L-isoleucine biosynthesis; L-isoleucine from 2-oxobutanoate: step 1/4. Its pathway is amino-acid biosynthesis; L-valine biosynthesis; L-valine from pyruvate: step 1/4. The chain is Acetolactate synthase large subunit (ilvI) from Buchnera aphidicola subsp. Schizaphis graminum (strain Sg).